We begin with the raw amino-acid sequence, 502 residues long: Glycerol kinase (502 aa).

Threonine 14 provides a ligand contact to ADP. The ATP site is built by threonine 14, threonine 15, and serine 16. Threonine 14 contacts sn-glycerol 3-phosphate. Arginine 18 is an ADP binding site. Arginine 84, glutamate 85, tyrosine 136, and aspartate 246 together coordinate sn-glycerol 3-phosphate. Glycerol-binding residues include arginine 84, glutamate 85, tyrosine 136, aspartate 246, and glutamine 247. Positions 268 and 311 each coordinate ADP. 4 residues coordinate ATP: threonine 268, glycine 311, glutamine 315, and glycine 412. Residues glycine 412 and asparagine 416 each contribute to the ADP site.

Belongs to the FGGY kinase family. In terms of assembly, homotetramer and homodimer (in equilibrium). Heterodimer with EIIA-Glc. Binds 1 zinc ion per glycerol kinase EIIA-Glc dimer. The zinc ion is important for dimerization.

It catalyses the reaction glycerol + ATP = sn-glycerol 3-phosphate + ADP + H(+). Its pathway is polyol metabolism; glycerol degradation via glycerol kinase pathway; sn-glycerol 3-phosphate from glycerol: step 1/1. Its activity is regulated as follows. Activity of this regulatory enzyme is affected by several metabolites. Allosterically and non-competitively inhibited by fructose 1,6-bisphosphate (FBP) and unphosphorylated phosphocarrier protein EIIA-Glc (III-Glc), an integral component of the bacterial phosphotransferase (PTS) system. Key enzyme in the regulation of glycerol uptake and metabolism. Catalyzes the phosphorylation of glycerol to yield sn-glycerol 3-phosphate. This is Glycerol kinase from Escherichia fergusonii (strain ATCC 35469 / DSM 13698 / CCUG 18766 / IAM 14443 / JCM 21226 / LMG 7866 / NBRC 102419 / NCTC 12128 / CDC 0568-73).